The primary structure comprises 929 residues: MCESYSRSLLRVSVAQICQALGWDSVQLSACHLLTDVLQRYLQQLGRGCHRYSELYGRTDPILDDVGEAFQLMGVSLHELEDYIHNIEPVTFPHQIPSFPVSKNNVLQFPQPGSKDAEERKEYIPDYLPPIVSSQEEEEEEQVPTDGGTSAEAMQVPLEEDDELEEEEIINDENFLGKRPLDSPEAEELPAMKRPRLLSTKGDTLDVVLLEAREPLSSINTQKIPPMLSPVHVQDSTDLAPPSPEPPMLAPVAKSQMPTAKPLETKSFTPKTKTKTSSPGQKTKSPKTAQSPAMVGSPIRSPKTVSKEKKSPGRSKSPKSPKSPKVTTHIPQTPVRPETPNRTPSATLSEKISKETIQVKQIQTPPDAGKLNSENQPKKAVVADKTIEASIDAVIARACAEREPDPFEFSSGSESEGDIFTSPKRISGPECTTPKASTSANNFTKSGSTPLPLSGGTSSSDNSWTMDASIDEVVRKAKLGTPSNMPPNFPYISSPSVSPPTPEPLHKVYEEKTKLPSSVEVKKKLKKELKTKMKKKEKQRDREREKDKNKDKSKEKDKVKEKEKDKETGRETKYPWKEFLKEEEADPYKFKIKEFEDVDPKVKLKDGLVRKEKEKHKDKKKDREKGKKDKDKREKEKVKDKGREDKMKAPAPPLVLPPKELALPLFSPATASRVPAMLPSLLPVLPEKLFEEKEKVKEKEKKKDKKEKKKKKEKEKEKKEKEREKEKREREKREKEKEKHKHEKIKVEPVALAPSPVIPRLTLRVGAGQDKIVISKVVPAPEAKPAPSQNRPKTPPPAPAPAPGPMLVSPAPVPLPLLAQAAAGPALLPSPGPAASGASAKAPVRSVVTETVSTYVIRDEWGNQIWICPGCNKPDDGSPMIGCDDCDDWYHWPCVGIMTAPPEEMQWFCPKCANKKKDKKHKKRKHRAH.

2 disordered regions span residues 131–152 (IVSS…TSAE) and 176–197 (LGKR…RPRL). A phosphoserine mark is found at Ser-183, Ser-199, Ser-229, and Ser-243. 2 disordered regions span residues 221–358 (TQKI…ETIQ) and 405–578 (DPFE…PWKE). The segment covering 265 to 288 (TKSFTPKTKTKTSSPGQKTKSPKT) has biased composition (low complexity). Lys-266 is subject to N6-acetyllysine. 3 positions are modified to phosphoserine: Ser-291, Ser-297, and Ser-301. 2 stretches are compositionally biased toward polar residues: residues 340 to 358 (PNRT…ETIQ) and 434 to 466 (PKAS…SWTM). Thr-501 is subject to Phosphothreonine. Over residues 504–514 (PLHKVYEEKTK) the composition is skewed to basic and acidic residues. Positions 523–537 (KKLKKELKTKMKKKE) are enriched in basic residues. A compositionally biased stretch (basic and acidic residues) spans 538-578 (KQRDREREKDKNKDKSKEKDKVKEKEKDKETGRETKYPWKE). Lys-581 participates in a covalent cross-link: Glycyl lysine isopeptide (Lys-Gly) (interchain with G-Cter in SUMO2). 2 stretches are compositionally biased toward basic and acidic residues: residues 603 to 612 (KLKDGLVRKE) and 621 to 648 (KDRE…DKMK). A disordered region spans residues 603 to 658 (KLKDGLVRKEKEKHKDKKKDREKGKKDKDKREKEKVKDKGREDKMKAPAPPLVLPP). Ser-667 carries the post-translational modification Phosphoserine. A compositionally biased stretch (basic and acidic residues) spans 692-701 (EKEKVKEKEK). A disordered region spans residues 692 to 748 (EKEKVKEKEKKKDKKEKKKKKEKEKEKKEKEREKEKREREKREKEKEKHKHEKIKVE). A compositionally biased stretch (basic residues) spans 702-713 (KKDKKEKKKKKE). The span at 714–737 (KEKEKKEKEREKEKREREKREKEK) shows a compositional bias: basic and acidic residues. Residue Lys-746 forms a Glycyl lysine isopeptide (Lys-Gly) (interchain with G-Cter in SUMO2) linkage. A Phosphoserine modification is found at Ser-755. At Lys-776 the chain carries N6-acetyllysine. The span at 778-787 (VPAPEAKPAP) shows a compositional bias: low complexity. Positions 778–807 (VPAPEAKPAPSQNRPKTPPPAPAPAPGPML) are disordered. Over residues 793-804 (KTPPPAPAPAPG) the composition is skewed to pro residues. A PHD-type zinc finger spans residues 865–915 (IWICPGCNKPDDGSPMIGCDDCDDWYHWPCVGIMTAPPEEMQWFCPKCANK). Zn(2+) is bound by residues Cys-868, Cys-871, Cys-883, Cys-886, His-891, Cys-894, Cys-909, and Cys-912.

The protein belongs to the TAF3 family. As to quaternary structure, component of the TFIID basal transcription factor complex, composed of TATA-box-binding protein TBP, and a number of TBP-associated factors (TAFs), including TAF1, TAF2, TAF3, TAF4, TAF5, TAF6, TAF7, TAF8, TAF9, TAF10, TAF11, TAF12 and TAF13. Interacts with TAF10 via the histone fold. Interacts with TAF13, TBP, SAP130 and GCN5L2. Interacts with TBPL2.

The protein resides in the nucleus. Its function is as follows. The TFIID basal transcription factor complex plays a major role in the initiation of RNA polymerase II (Pol II)-dependent transcription. TFIID recognizes and binds promoters with or without a TATA box via its subunit TBP, a TATA-box-binding protein, and promotes assembly of the pre-initiation complex (PIC). The TFIID complex consists of TBP and TBP-associated factors (TAFs), including TAF1, TAF2, TAF3, TAF4, TAF5, TAF6, TAF7, TAF8, TAF9, TAF10, TAF11, TAF12 and TAF13. The TFIID complex structure can be divided into 3 modules TFIID-A, TFIID-B, and TFIID-C. TAF3 forms the TFIID-A module together with TAF5 and TBP. Required in complex with TBPL2 for the differentiation of myoblasts into myocytes. The TAF3-TBPL2 complex replaces TFIID at specific promoters at an early stage in the differentiation process. The chain is Transcription initiation factor TFIID subunit 3 (TAF3) from Homo sapiens (Human).